A 249-amino-acid chain; its full sequence is Phosphate import ATP-binding protein PstB 3 (249 aa).

The ABC transporter domain occupies 4-244 (LVINNLDLYY…PQDERTENYI (241 aa)). 36–43 (GPSGCGKS) is a binding site for ATP.

The protein belongs to the ABC transporter superfamily. Phosphate importer (TC 3.A.1.7) family. As to quaternary structure, the complex is composed of two ATP-binding proteins (PstB), two transmembrane proteins (PstC and PstA) and a solute-binding protein (PstS).

Its subcellular location is the cell membrane. It carries out the reaction phosphate(out) + ATP + H2O = ADP + 2 phosphate(in) + H(+). In terms of biological role, part of the ABC transporter complex PstSACB involved in phosphate import. Responsible for energy coupling to the transport system. The chain is Phosphate import ATP-binding protein PstB 3 from Streptococcus agalactiae serotype Ia (strain ATCC 27591 / A909 / CDC SS700).